The sequence spans 596 residues: Sodium/mannose cotransporter SLC5A10 (596 aa).

At 1-15 (MAANSTSDLHTPGTQ) the chain is on the extracellular side. Asn4 is a glycosylation site (N-linked (GlcNAc...) asparagine). The helical transmembrane segment at 16–36 (LSVADIIVITVYFALNVAVGI) threads the bilayer. Over 37–72 (WSSCRASRNTVNGYFLAGRDMTWWPIGASLFASSEG) the chain is Cytoplasmic. The helical transmembrane segment at 73-93 (SGLFIGLAGSGAAGGLAVAGF) threads the bilayer. At 94–99 (EWNATY) the chain is on the extracellular side. Asn96 carries N-linked (GlcNAc...) asparagine glycosylation. A helical transmembrane segment spans residues 100–120 (VLLALAWVFVPIYISSEIVTL). The Cytoplasmic segment spans residues 121 to 149 (PEYIQKRYGGQRIRMYLSVLSLLLSVFTK). A phosphoserine mark is found at Ser141 and Ser145. At Thr148 the chain carries Phosphothreonine. The helical transmembrane segment at 150–170 (ISLDLYAGALFVHICLGWNFY) threads the bilayer. The Extracellular segment spans residues 171-173 (LST). The chain crosses the membrane as a helical span at residues 174–194 (ILTLGITALYTIAGGLAAVIY). The Cytoplasmic segment spans residues 195 to 200 (TDALQT). A helical transmembrane segment spans residues 201–221 (LIMVVGAVILTIKAFDQIGGY). Residues 222-264 (GQLEAAYAQAIPSRTIANTTCHLPRTDAMHMFRDPHTGDLPWT) lie on the Extracellular side of the membrane. Residues 265–285 (GMTFGLTIMATWYWCTDQVIV) traverse the membrane as a helical segment. At 286-300 (QRSLSARDLNHAKAG) the chain is on the cytoplasmic side. Residues 301–321 (SILASYLKMLPMGLIIMPGMI) traverse the membrane as a helical segment. Residues 322 to 355 (SRALFPDDVGCVVPSECLRACGAEVGCSNIAYPK) lie on the Extracellular side of the membrane. A helical transmembrane segment spans residues 356 to 376 (LVMELMPIGLRGLMIAVMLAA). Over 377-409 (LMSSLTSIFNSSSTLFTMDIWRRLRPRSGEREL) the chain is Cytoplasmic. Residues 410 to 430 (LLVGRLVIVALIGVSVAWIPV) form a helical membrane-spanning segment. The Extracellular segment spans residues 431 to 443 (LQDSNSGQLFIYM). The chain crosses the membrane as a helical span at residues 444–464 (QSVTSSLAPPVTAVFVLGVFW). Over 465–471 (RRANEQG) the chain is Cytoplasmic. A helical membrane pass occupies residues 472–492 (AFWGLIAGLVVGATRLVLEFL). Over 493 to 513 (NPAPPCGEPDTRPAVLGSIHY) the chain is Extracellular. A helical membrane pass occupies residues 514–534 (LHFAVALFALSGAVVVAGSLL). Topologically, residues 535-575 (TPPPQSVQIENLTWWTLAQDVPLGTKAGDGQTPQKHAFWAR) are cytoplasmic. A helical transmembrane segment spans residues 576–596 (VCGFNAILLMCVNIFFYAYFA).

It belongs to the sodium:solute symporter (SSF) (TC 2.A.21) family. Predominantly expressed at high levels in kidney. Very low expression is detected in testes. In terms of tissue distribution, expressed in kidney. As to expression, the most abundant isoform expressed in kidney.

The protein localises to the apical cell membrane. The catalysed reaction is D-mannose(out) + Na(+)(out) = D-mannose(in) + Na(+)(in). It carries out the reaction D-fructopyranose(out) + Na(+)(out) = D-fructopyranose(in) + Na(+)(in). Its activity is regulated as follows. Inhibited by phlorizin. Its function is as follows. Electrogenic Na+-coupled sugar symporter that actively transports D-mannose or D-fructose at the plasma membrane, with a Na+ to sugar coupling ratio of 1:1. Transporter activity is driven by a transmembrane Na+ electrochemical gradient set by the Na+/K+ pump. Exclusively recognizes sugar substrates having a pyranose ring with an axial hydroxyl group on carbon 2. Has likely evolved to enable renal reabsorption of D-mannose, an important constituent of oligosaccharide chains of glycoproteins. Contributes to dietary D-fructose reabsorption from glomerular filtrate across the brush border of the kidney. Functionally, appears to have no transporter activity. This chain is Sodium/mannose cotransporter SLC5A10 (SLC5A10), found in Homo sapiens (Human).